A 282-amino-acid chain; its full sequence is uncharacterized protein (282 aa).

Residues 22–42 (YLFTLGSFVTMFFVLCISPVF) traverse the membrane as a helical segment.

Its subcellular location is the cell membrane. This is an uncharacterized protein from Bacillus anthracis.